The chain runs to 383 residues: Adaptive-response sensory kinase SasA (383 aa).

In terms of domain architecture, Histidine kinase spans methionine 161–arginine 383. Histidine 164 carries the post-translational modification Phosphohistidine; by autocatalysis.

As to quaternary structure, homooligomerizes. Interacts with KaiC1. Interacts with KaiC1 and RpaA. Binds to the B-loop in the CI domain of KaiC; SasA and KaiB compete to bind to the CI domain.

It catalyses the reaction ATP + protein L-histidine = ADP + protein N-phospho-L-histidine.. Member of the two-component regulatory system SasA/RpaA involved in genome-wide circadian gene expression. One of several clock output pathways. Participates in the Kai clock protein complex, the main circadian regulator in cyanobacteria, via its interaction with KaiC. KaiC enhances the autophosphorylation activity of SasA, which then transfers its phosphate group to RpaA to activate it. In addition to its output function, recruits fold-shifted KaiB (KaiB(fs)) to KaiC to cooperatively form the KaiB(6):KaiC(6) complex (independent of SasA kinase activity). Required for robustness of the circadian rhythm of gene expression and is involved in clock output, also required for adaptation to light/dark cycles. Functionally, plays an important role in glucose metabolism, important for expression of genes involved in glycolysis, gluconeogenesis, the oxidative pentose phosphate pathway, and glycogen metabolism. Required for heterotrophic growth. Overexpression from the psbAII promoter leads to altered levels of genes involved in carbon metabolism, increased levels of transcripts for clock oscillator genes in the light and the dark, complete loss of glycogen accumulation, decreased levels of metabolites of sugar catabolism and increased levels of amino acids in the light and increased levels of SigE protein. This is Adaptive-response sensory kinase SasA from Synechocystis sp. (strain ATCC 27184 / PCC 6803 / Kazusa).